The following is a 244-amino-acid chain: Electron transfer flavoprotein beta subunit lysine methyltransferase homolog (244 aa).

The protein belongs to the methyltransferase superfamily. ETFBKMT family.

Its function is as follows. Probable methyltransferase. The protein is Electron transfer flavoprotein beta subunit lysine methyltransferase homolog of Caenorhabditis elegans.